Reading from the N-terminus, the 821-residue chain is Maternal DNA replication licensing factor mcm6 (821 aa).

Residues 159–186 (CMDCQSVVKDVEQQFRYTQPTICKNPVC) form a C4-type zinc finger. The 208-residue stretch at 347 to 554 (LYHNLCTSLF…TDYAIARRIV (208 aa)) folds into the MCM domain. Residue 397 to 404 (GDPSTSKS) coordinates ATP. An Arginine finger motif is present at residues 529-532 (SRFD).

Belongs to the MCM family. As to quaternary structure, component of the mcm2-7 complex (RLF-M). The complex forms a toroidal hexameric ring with the proposed subunit order mcm2-mcm6-mcm4-mcm7-mcm3-mcm5. The heterodimer of mmcm3/mcm5 interacts with mcm4, mmcm6, mcm7 and weakly with mcm2. Component of the CMG helicase complex, composed of the mcm2-7 complex, the GINS complex and cdc45.

The protein localises to the nucleus. The protein resides in the chromosome. The enzyme catalyses ATP + H2O = ADP + phosphate + H(+). Functionally, acts as a component of the mcm2-7 complex (mcm complex) which is the putative replicative helicase essential for 'once per cell cycle' DNA replication initiation and elongation in eukaryotic cells. The active ATPase sites in the mcm2-7 ring are formed through the interaction surfaces of two neighboring subunits such that a critical structure of a conserved arginine finger motif is provided in trans relative to the ATP-binding site of the Walker A box of the adjacent subunit. The six ATPase active sites, however, are likely to contribute differentially to the complex helicase activity. The existence of maternal and zygotic forms of mcm3 and mcm6 suggests that specific forms of mcm2-7 complexes may be used during different stages of development. The polypeptide is Maternal DNA replication licensing factor mcm6 (Xenopus tropicalis (Western clawed frog)).